The chain runs to 292 residues: Oxidative stress-responsive serine-rich protein 1 (292 aa).

Residues 27–175 form a disordered region; sequence SIASLSVGEG…SSDATQVSQA (149 aa). The segment covering 65–83 has biased composition (basic residues); it reads STRKSSRGVVRTQRRRRSK. A phosphothreonine mark is found at T143 and T233.

This chain is Oxidative stress-responsive serine-rich protein 1 (OSER1), found in Pongo abelii (Sumatran orangutan).